Reading from the N-terminus, the 83-residue chain is Urotensin-2 (83 aa).

Positions 49 to 71 (EVLLEKQSLLNPFSRVFGIRKQF) are excised as a propeptide. Cys77 and Cys82 are oxidised to a cystine.

This sequence belongs to the urotensin-2 family.

Its subcellular location is the secreted. Its function is as follows. Urotensin is found in the teleost caudal neurosecretory system. It has a suggested role in osmoregulation and as a corticotropin-releasing factor. The non-hormonal portion of this precursor may be a urotensin binding protein, urophysin. The protein is Urotensin-2 of Platichthys flesus (European flounder).